The primary structure comprises 612 residues: MKSNLSLKRQDEKRADKEPNLYTLQGVIQYLQYEAFKNERDHNLWEIERAELKIRVAQLERERAKLEQSLSFQQRRAEMLEKSLRELRKDKNISVKDLDEFHLLDKPAANNTKADAEACLLKSKNYIKKSLQEIVYLTNMQPNVSWNVLQEPTRGIKVPKESNNTQQNNQFVMEPSQNKGNVNDANFFEVEYARNENMNKLSSSELISDDLLEDEIMKPLSSGESLPKKEEEVTKSPSFTLDDSVASNEQTLAQLNIESPVDQKKSKAKKKKEQKWTLKFESDKGTSTQCITHQPLPGSTPSFASGTENGVINVWRLDEDSNDNSMGIIKPHLTFYGHEGPVLCVCVPKATHHIFSGGHDGTIRCWSLPANQTSDSISKILTGSTIFQGHEDCVWELFCHEVKDNNPILLSLSSDGTVRGWKYTGEQLFKIRCDSKQPLSMSVTDSRIAIAYNDGNVRFYDLDTQILVSQMRIAGNSAIGNPAVKDRINKIVWKNGNPDRLYSLHENGMVRVFDVKSEELLAEKSISKVSLTGIAFAVNRPEFAISASDGRVFFLRQDDKLSTLESLPSREAQEEITDLSDILWINSPVDKLEHLIVGCKERISVYDRKYLP.

Positions 39–100 (ERDHNLWEIE…KNISVKDLDE (62 aa)) form a coiled coil. Residues 219–241 (PLSSGESLPKKEEEVTKSPSFTL) are disordered. 7 WD repeats span residues 286 to 325 (TSTQ…NDNS), 337 to 376 (GHEG…TSDS), 389 to 432 (GHED…FKIR), 434 to 470 (DSKQ…LVSQ), 483 to 523 (AVKD…LLAE), 526 to 565 (ISKV…STLE), and 574 to 612 (EEIT…KYLP).

The protein localises to the cytoplasm. This is an uncharacterized protein from Schizosaccharomyces pombe (strain 972 / ATCC 24843) (Fission yeast).